Consider the following 246-residue polypeptide: Transmembrane and ubiquitin-like domain-containing protein 1 (246 aa).

The segment at 2–30 is required to release iHOPS from membranes; that stretch reads ALIEGVGDEVTILFSALACLLVLALAWVS. A helical membrane pass occupies residues 11–31; the sequence is VTILFSALACLLVLALAWVST. Positions 35–102 are disordered; the sequence is EGADPLPQPS…PPPPDSPQEP (68 aa). Positions 40-50 are enriched in pro residues; it reads LPQPSGTPTPT. A phosphothreonine mark is found at Thr-71 and Thr-92. Phosphoserine occurs at positions 98 and 127. In terms of domain architecture, Ubiquitin-like spans 103 to 176; sequence LVLRLKFLND…LHCHVSTRVG (74 aa). Transmembrane regions (helical) follow at residues 195 to 215 and 221 to 241; these read VGSLLLPLLLLLLLLLWYCQI and FPLTATLGLAGFTLLLSLLAF.

Interacts with EEF1A1, GRIA2, GRIP1, CAMLG, TUBG1. Interacts with NPM1 and CDKN2A; TMUB1 can enhance interaction between NPM1 and CDKN2A and is proposed to bridge the proteins; proposed to be mediated by iHOPS. Interacts with ERLIN2 and AMFR; TMUB1 promotes the interaction of ERLIN2 with AMFR. Post-translationally, processed by regulated intramembrane proteolysis (RIP) in the N-terminus to release iHOPS from membranes.

The protein localises to the membrane. The protein resides in the postsynaptic cell membrane. It is found in the recycling endosome. It localises to the cytoplasm. Its subcellular location is the nucleus. The protein localises to the nucleolus. The protein resides in the cytoskeleton. It is found in the microtubule organizing center. It localises to the centrosome. Functionally, involved in sterol-regulated ubiquitination and degradation of HMG-CoA reductase HMGCR. Involved in positive regulation of AMPA-selective glutamate receptor GRIA2 recycling to the cell surface. Acts as negative regulator of hepatocyte growth during regeneration. May contribute to the regulation of translation during cell-cycle progression. May contribute to the regulation of cell proliferation. May be involved in centrosome assembly. Modulates stabilization and nucleolar localization of tumor suppressor CDKN2A and enhances association between CDKN2A and NPM1. In Bos taurus (Bovine), this protein is Transmembrane and ubiquitin-like domain-containing protein 1 (TMUB1).